Here is a 532-residue protein sequence, read N- to C-terminus: Glutamate--cysteine ligase (532 aa).

It belongs to the glutamate--cysteine ligase type 1 family. Type 1 subfamily.

The enzyme catalyses L-cysteine + L-glutamate + ATP = gamma-L-glutamyl-L-cysteine + ADP + phosphate + H(+). Its pathway is sulfur metabolism; glutathione biosynthesis; glutathione from L-cysteine and L-glutamate: step 1/2. The protein is Glutamate--cysteine ligase of Pseudomonas fluorescens (strain Pf0-1).